We begin with the raw amino-acid sequence, 149 residues long: 3-dehydroquinate dehydratase (149 aa).

Residue Tyr25 is the Proton acceptor of the active site. Asn76, His82, and Asp89 together coordinate substrate. His102 (proton donor) is an active-site residue. Substrate contacts are provided by residues 103–104 and Arg113; that span reads LS.

The protein belongs to the type-II 3-dehydroquinase family. Homododecamer.

It catalyses the reaction 3-dehydroquinate = 3-dehydroshikimate + H2O. Its pathway is metabolic intermediate biosynthesis; chorismate biosynthesis; chorismate from D-erythrose 4-phosphate and phosphoenolpyruvate: step 3/7. Functionally, catalyzes a trans-dehydration via an enolate intermediate. This chain is 3-dehydroquinate dehydratase, found in Acaryochloris marina (strain MBIC 11017).